Reading from the N-terminus, the 149-residue chain is HTH-type transcriptional regulator LrpB (149 aa).

In terms of domain architecture, HTH asnC-type spans 3–64 (IDSIDFQILQ…VVDELKMGFS (62 aa)). The segment at residues 22–41 (WKEIGEKIHMTGQAVGNRIK) is a DNA-binding region (H-T-H motif).

Functionally, negative regulation of glyA transcription and kinB-dependent sporulation. This is HTH-type transcriptional regulator LrpB (lrpB) from Bacillus subtilis (strain 168).